A 101-amino-acid chain; its full sequence is Small ribosomal subunit protein uS14 (101 aa).

It belongs to the universal ribosomal protein uS14 family. As to quaternary structure, part of the 30S ribosomal subunit. Contacts proteins S3 and S10.

Binds 16S rRNA, required for the assembly of 30S particles and may also be responsible for determining the conformation of the 16S rRNA at the A site. This is Small ribosomal subunit protein uS14 from Methylibium petroleiphilum (strain ATCC BAA-1232 / LMG 22953 / PM1).